A 375-amino-acid chain; its full sequence is Nucleolysin TIAR (375 aa).

RRM domains are found at residues 9-85 and 97-175; these read RTLY…WATT and FHVF…WATR. At Lys-122 the chain carries N6-acetyllysine. A Phosphoserine modification is found at Ser-201. An RRM 3 domain is found at 205-277; sequence CTVYCGGIAS…HVVKCYWGKE (73 aa). Residues 345-375 form a disordered region; sequence FGAQPPQGQAPPPVIPPPNQAGYGMASYQTQ. A compositionally biased stretch (pro residues) spans 352–363; sequence GQAPPPVIPPPN.

As to quaternary structure, interacts with FASTK. Post-translationally, phosphorylated by MAPK14 following DNA damage, releasing TIAR from GADD45A mRNA. Expressed in brain, heart, kidney, lung and skeletal muscle.

It is found in the nucleus. Its subcellular location is the cytoplasm. The protein resides in the cytolytic granule. The protein localises to the stress granule. Functionally, RNA-binding protein involved in alternative pre-RNA splicing and in cytoplasmic stress granules formation. Shows a preference for uridine-rich RNAs. Activates splicing of alternative exons with weak 5' splice sites followed by a U-rich stretch on its own pre-mRNA and on TIA1 mRNA. Promotes the inclusion of TIA1 exon 5 to give rise to the long isoform (isoform a) of TIA1. Acts downstream of the stress-induced phosphorylation of EIF2S1/EIF2A to promote the recruitment of untranslated mRNAs to cytoplasmic stress granules (SG). Possesses nucleolytic activity against cytotoxic lymphocyte target cells. May be involved in apoptosis. The polypeptide is Nucleolysin TIAR (TIAL1) (Homo sapiens (Human)).